The chain runs to 456 residues: Bifunctional protein GlmU (456 aa).

The tract at residues 1-229 (MLNSAMSVVI…LSEVEGVNNR (229 aa)) is pyrophosphorylase. UDP-N-acetyl-alpha-D-glucosamine is bound by residues 11 to 14 (LAAG), lysine 25, glutamine 76, 81 to 82 (GT), 103 to 105 (YGD), glycine 140, glutamate 154, asparagine 169, and asparagine 227. Position 105 (aspartate 105) interacts with Mg(2+). Asparagine 227 serves as a coordination point for Mg(2+). The segment at 230–250 (LQLSRLERVYQSEQAEKLLLA) is linker. The N-acetyltransferase stretch occupies residues 251-456 (GVMLRDPARF…QGWQRPAKKK (206 aa)). Residues arginine 333 and lysine 351 each coordinate UDP-N-acetyl-alpha-D-glucosamine. Histidine 363 acts as the Proton acceptor in catalysis. The UDP-N-acetyl-alpha-D-glucosamine site is built by tyrosine 366 and asparagine 377. Acetyl-CoA-binding positions include alanine 380, 386–387 (NY), serine 405, alanine 423, and arginine 440.

In the N-terminal section; belongs to the N-acetylglucosamine-1-phosphate uridyltransferase family. It in the C-terminal section; belongs to the transferase hexapeptide repeat family. In terms of assembly, homotrimer. It depends on Mg(2+) as a cofactor.

It localises to the cytoplasm. It catalyses the reaction alpha-D-glucosamine 1-phosphate + acetyl-CoA = N-acetyl-alpha-D-glucosamine 1-phosphate + CoA + H(+). The enzyme catalyses N-acetyl-alpha-D-glucosamine 1-phosphate + UTP + H(+) = UDP-N-acetyl-alpha-D-glucosamine + diphosphate. It participates in nucleotide-sugar biosynthesis; UDP-N-acetyl-alpha-D-glucosamine biosynthesis; N-acetyl-alpha-D-glucosamine 1-phosphate from alpha-D-glucosamine 6-phosphate (route II): step 2/2. The protein operates within nucleotide-sugar biosynthesis; UDP-N-acetyl-alpha-D-glucosamine biosynthesis; UDP-N-acetyl-alpha-D-glucosamine from N-acetyl-alpha-D-glucosamine 1-phosphate: step 1/1. Its pathway is bacterial outer membrane biogenesis; LPS lipid A biosynthesis. Its function is as follows. Catalyzes the last two sequential reactions in the de novo biosynthetic pathway for UDP-N-acetylglucosamine (UDP-GlcNAc). The C-terminal domain catalyzes the transfer of acetyl group from acetyl coenzyme A to glucosamine-1-phosphate (GlcN-1-P) to produce N-acetylglucosamine-1-phosphate (GlcNAc-1-P), which is converted into UDP-GlcNAc by the transfer of uridine 5-monophosphate (from uridine 5-triphosphate), a reaction catalyzed by the N-terminal domain. This Citrobacter koseri (strain ATCC BAA-895 / CDC 4225-83 / SGSC4696) protein is Bifunctional protein GlmU.